Reading from the N-terminus, the 947-residue chain is Zinc finger CCCH domain-containing protein 18 (947 aa).

Residue Met1 is modified to N-acetylmethionine. Disordered stretches follow at residues 1–218 (MDVA…PRPT), 275–295 (GGPV…TESA), and 387–921 (YTEA…TLSR). Ser6, Ser32, Ser44, Ser57, Ser63, Ser70, Ser74, Ser79, and Ser91 each carry phosphoserine. A compositionally biased stretch (basic and acidic residues) spans 73–85 (KSQDQDSEAHELS). Positions 94–104 (EEGDDAEEDGT) are enriched in acidic residues. Thr104 is subject to Phosphothreonine. 2 positions are modified to phosphoserine: Ser105 and Ser113. The segment covering 105-119 (SDLRDEASSVTRELD) has biased composition (basic and acidic residues). Composition is skewed to acidic residues over residues 120-131 (EHELDYDEEVPE) and 138-153 (QEEE…EEEK). The segment covering 160 to 185 (EEGKPDVQSVGEKEPTEAAKEKKKED) has biased composition (basic and acidic residues). At Ser168 the chain carries Phosphoserine. The span at 186–202 (DDGEIDDGEIDDDDLEE) shows a compositional bias: acidic residues. Residues 203-212 (GEVKDPSDRK) are compositionally biased toward basic and acidic residues. A C3H1-type zinc finger spans residues 214 to 240 (RPRPTCRFFMKGNCTWGMNCRFIHPGV). Positions 391–479 (EPYHNYRDRE…DRDKDKEKPK (89 aa)) are enriched in basic and acidic residues. Ser482 bears the Phosphoserine mark. A Glycyl lysine isopeptide (Lys-Gly) (interchain with G-Cter in SUMO2) cross-link involves residue Lys505. Positions 505–515 (KRADEWKDPWR) are enriched in basic and acidic residues. Ser527, Ser529, and Ser531 each carry phosphoserine. The span at 540-601 (SASSASASNS…SRSRSFSSSP (62 aa)) shows a compositional bias: low complexity. Residues 602–611 (SPSPTPSPHR) show a composition bias toward pro residues. Glycyl lysine isopeptide (Lys-Gly) (interchain with G-Cter in SUMO2) cross-links involve residues Lys617 and Lys656. Positions 656-665 (KPGDLREARR) are enriched in basic and acidic residues. Composition is skewed to low complexity over residues 687–720 (GSSY…SVHS) and 731–745 (ASPV…PTPA). A compositionally biased stretch (basic and acidic residues) spans 755-769 (KKEDGVREEKRKRDP). Residues 773 to 804 (PPKSSKAPAGGKASQQAAAPQQAAPGQPQQGS) show a composition bias toward low complexity. Lys809 is subject to N6-acetyllysine. Lys812 is covalently cross-linked (Glycyl lysine isopeptide (Lys-Gly) (interchain with G-Cter in SUMO2)). Residues 819 to 836 (AAEKGSRKRYEPSDKDRQ) show a composition bias toward basic and acidic residues. 5 positions are modified to phosphoserine: Ser837, Ser846, Ser862, Ser887, and Ser890. Positions 887-918 (SPQSKSSSKVTSVPGKATDTATAGTKSGKAST) are enriched in low complexity. A Glycyl lysine isopeptide (Lys-Gly) (interchain with G-Cter in SUMO2) cross-link involves residue Lys902. Residues 915–944 (KASTLSRREELLKQLKAVEDAIARKRAKIP) are a coiled coil.

Interacts with ZFC3H1 in a RNase-insensitive manner.

The protein localises to the nucleus. The protein is Zinc finger CCCH domain-containing protein 18 (Zc3h18) of Rattus norvegicus (Rat).